Consider the following 342-residue polypeptide: Ketol-acid reductoisomerase (NADP(+)) (342 aa).

The region spanning 2–182 is the KARI N-terminal Rossmann domain; that stretch reads AEIYYDNDAD…GGLRAGGIKT (181 aa). NADP(+)-binding positions include 25–28, Lys48, Ser51, Ser53, and 83–86; these read YGSQ and DQVQ. His108 is a catalytic residue. An NADP(+)-binding site is contributed by Gly134. In terms of domain architecture, KARI C-terminal knotted spans 183-328; sequence TFTEETETDL…RELRKLFAWN (146 aa). Asp191, Glu195, Glu227, and Glu231 together coordinate Mg(2+). Ser252 is a binding site for substrate.

Belongs to the ketol-acid reductoisomerase family. Mg(2+) serves as cofactor.

The catalysed reaction is (2R)-2,3-dihydroxy-3-methylbutanoate + NADP(+) = (2S)-2-acetolactate + NADPH + H(+). It carries out the reaction (2R,3R)-2,3-dihydroxy-3-methylpentanoate + NADP(+) = (S)-2-ethyl-2-hydroxy-3-oxobutanoate + NADPH + H(+). Its pathway is amino-acid biosynthesis; L-isoleucine biosynthesis; L-isoleucine from 2-oxobutanoate: step 2/4. The protein operates within amino-acid biosynthesis; L-valine biosynthesis; L-valine from pyruvate: step 2/4. Functionally, involved in the biosynthesis of branched-chain amino acids (BCAA). Catalyzes an alkyl-migration followed by a ketol-acid reduction of (S)-2-acetolactate (S2AL) to yield (R)-2,3-dihydroxy-isovalerate. In the isomerase reaction, S2AL is rearranged via a Mg-dependent methyl migration to produce 3-hydroxy-3-methyl-2-ketobutyrate (HMKB). In the reductase reaction, this 2-ketoacid undergoes a metal-dependent reduction by NADPH to yield (R)-2,3-dihydroxy-isovalerate. This chain is Ketol-acid reductoisomerase (NADP(+)), found in Leifsonia xyli subsp. xyli (strain CTCB07).